Reading from the N-terminus, the 436-residue chain is Methanethiol oxidase (436 aa).

The signal sequence occupies residues 1–24 (MKRREFGALAAGALAMGLPFRAFA).

It belongs to the selenium-binding protein family.

It is found in the periplasm. It carries out the reaction methanethiol + O2 + H2O = hydrogen sulfide + formaldehyde + H2O2 + H(+). Its pathway is organosulfur degradation. Functionally, catalyzes the oxidation of methanethiol. The sequence is that of Methanethiol oxidase from Ruegeria pomeroyi (strain ATCC 700808 / DSM 15171 / DSS-3) (Silicibacter pomeroyi).